A 687-amino-acid polypeptide reads, in one-letter code: Ferric transport system permease protein FbpB (687 aa).

Helical transmembrane passes span 10-30 (LFESSHFWILLSLIAFIALPS), 50-70 (GWSSVNLTILWFLPLIGFWLL), 85-105 (LGLISFILLFAFISATIYKVS), 106-126 (MGYSVIVLIATLTALATFAFA), 141-161 (LLSIILLIFFFIVYPTVAIFI), 192-212 (LFLSGFVGIVSTVFGLAFALY), 226-246 (IFSILPIVTPPFVVGLGVTLM), 271-291 (GFNGIAIAQILAFAPISFMIL), 318-338 (YNIIFPLLRPALANSFLIVFI), 347-367 (PLVLGGSFDVIATQIYFYIAG), 378-398 (LGSMLLIFSLLIFIVQYMWIG), 425-445 (IIVMLGFWVVFNFALYGSIFY), 450-472 (VNWGVDYTLTLNNYAMLFGQGLS), 484-504 (IYAGIAAPLTALFGLLIAYIV), 517-537 (FLTMLCFAVPGTVAGVSYILA), 538-558 (FNDAPMYITGTGIIIIISMVM), 594-614 (IWFIVFPLLKPALLSALVTSF), 620-640 (TVSAIVFLVTADTRVATAYIL), and 649-669 (GVAIAYGSILIVVMMAIILFF). The 206-residue stretch at 188–393 (ISNSLFLSGF…IFSLLIFIVQ (206 aa)) folds into the ABC transmembrane type-1 1 domain. The ABC transmembrane type-1 2 domain maps to 479-669 (LINTMIYAGI…VVMMAIILFF (191 aa)).

Belongs to the binding-protein-dependent transport system permease family. FbpB subfamily. The complex is composed of two ATP-binding proteins (FbpC), two transmembrane proteins (FbpB) and a solute-binding protein (FbpA).

It is found in the cell inner membrane. In terms of biological role, part of the ABC transporter complex FbpABC (TC 3.A.1.10.1) involved in Fe(3+) ions import. Probably responsible for the translocation of the substrate across the membrane. The protein is Ferric transport system permease protein FbpB (fbpB) of Actinobacillus pleuropneumoniae (Haemophilus pleuropneumoniae).